The sequence spans 240 residues: Aldehyde dehydrogenase, cytosolic 2 (240 aa).

Catalysis depends on residues E8 and C42. 4 positions are modified to N6-acetyllysine: K106, K149, K151, and K174.

This sequence belongs to the aldehyde dehydrogenase family. As to quaternary structure, homotetramer. As to expression, non-lens specific, predominant form expressed in the liver.

It localises to the cytoplasm. The enzyme catalyses an aldehyde + NAD(+) + H2O = a carboxylate + NADH + 2 H(+). The protein operates within alcohol metabolism; ethanol degradation; acetate from ethanol: step 2/2. Its function is as follows. Elephant shrews, in contrast to other mammals, possess both a lens- and a non-lens specific class-1 aldehyde dehydrogenase. Can convert/oxidize retinaldehyde to retinoic acid. The sequence is that of Aldehyde dehydrogenase, cytosolic 2 from Macroscelides proboscideus (Short-eared elephant shrew).